Here is a 92-residue protein sequence, read N- to C-terminus: UPF0298 protein BH2594 (92 aa).

It belongs to the UPF0298 family.

The protein resides in the cytoplasm. The chain is UPF0298 protein BH2594 from Halalkalibacterium halodurans (strain ATCC BAA-125 / DSM 18197 / FERM 7344 / JCM 9153 / C-125) (Bacillus halodurans).